The chain runs to 594 residues: A-type ATP synthase subunit A (594 aa).

236–243 provides a ligand contact to ATP; it reads GPFGSGKT.

This sequence belongs to the ATPase alpha/beta chains family. In terms of assembly, has multiple subunits with at least A(3), B(3), C, D, E, F, H, I and proteolipid K(x).

The protein resides in the cell membrane. The catalysed reaction is ATP + H2O + 4 H(+)(in) = ADP + phosphate + 5 H(+)(out). Functionally, component of the A-type ATP synthase that produces ATP from ADP in the presence of a proton gradient across the membrane. The A chain is the catalytic subunit. In Pyrobaculum calidifontis (strain DSM 21063 / JCM 11548 / VA1), this protein is A-type ATP synthase subunit A.